The sequence spans 70 residues: Probable rubredoxin HupI (70 aa).

The 52-residue stretch at 15–66 (DDRMECGICWHVYDPAEGDPVWQIPPGTPFSNLTEDWRCPNCDALQSKFMRL) folds into the Rubredoxin-like domain. The Fe cation site is built by cysteine 20, cysteine 23, cysteine 53, and cysteine 56.

The protein belongs to the rubredoxin family. It depends on Fe(3+) as a cofactor.

Could be an electron transport intermediate in hydrogen oxidation. This is Probable rubredoxin HupI (hupI) from Rhizobium leguminosarum bv. viciae.